A 429-amino-acid chain; its full sequence is Ribosomal RNA small subunit methyltransferase B (429 aa).

S-adenosyl-L-methionine-binding positions include 254–260 (CAAPGGK), aspartate 277, aspartate 303, and aspartate 322. Cysteine 375 serves as the catalytic Nucleophile.

This sequence belongs to the class I-like SAM-binding methyltransferase superfamily. RsmB/NOP family.

The protein resides in the cytoplasm. The enzyme catalyses cytidine(967) in 16S rRNA + S-adenosyl-L-methionine = 5-methylcytidine(967) in 16S rRNA + S-adenosyl-L-homocysteine + H(+). Its function is as follows. Specifically methylates the cytosine at position 967 (m5C967) of 16S rRNA. The protein is Ribosomal RNA small subunit methyltransferase B of Shigella flexneri.